Consider the following 154-residue polypeptide: Transcriptional repressor NrdR (154 aa).

A zinc finger spans residues 3-34 (CPFCSHNDSKVIDSRPTDEGQAIRRRRECISC). The ATP-cone domain maps to 49–139 (LIVVKKNGNR…VYREFKDINT (91 aa)).

Belongs to the NrdR family. It depends on Zn(2+) as a cofactor.

Its function is as follows. Negatively regulates transcription of bacterial ribonucleotide reductase nrd genes and operons by binding to NrdR-boxes. The sequence is that of Transcriptional repressor NrdR from Alkaliphilus oremlandii (strain OhILAs) (Clostridium oremlandii (strain OhILAs)).